We begin with the raw amino-acid sequence, 594 residues long: UvrABC system protein C (594 aa).

A GIY-YIG domain is found at 14 to 91 (DQPGCYLMKD…IKKHDPKYNI (78 aa)). The UVR domain maps to 196–231 (KEVRSELETKMYEASEKLEFERAKELRDQIAHIDAI).

The protein belongs to the UvrC family. Interacts with UvrB in an incision complex.

Its subcellular location is the cytoplasm. Functionally, the UvrABC repair system catalyzes the recognition and processing of DNA lesions. UvrC both incises the 5' and 3' sides of the lesion. The N-terminal half is responsible for the 3' incision and the C-terminal half is responsible for the 5' incision. This Bacillus cereus (strain AH187) protein is UvrABC system protein C.